The chain runs to 162 residues: Probable chorismate pyruvate-lyase (162 aa).

Residues R54, L92, and E149 each coordinate substrate.

The protein belongs to the UbiC family.

The protein localises to the cytoplasm. It carries out the reaction chorismate = 4-hydroxybenzoate + pyruvate. It participates in cofactor biosynthesis; ubiquinone biosynthesis. Removes the pyruvyl group from chorismate, with concomitant aromatization of the ring, to provide 4-hydroxybenzoate (4HB) for the ubiquinone pathway. The polypeptide is Probable chorismate pyruvate-lyase (Methylococcus capsulatus (strain ATCC 33009 / NCIMB 11132 / Bath)).